The primary structure comprises 302 residues: 4-hydroxy-tetrahydrodipicolinate synthase (302 aa).

Pyruvate is bound at residue Thr55. Tyr144 functions as the Proton donor/acceptor in the catalytic mechanism. Catalysis depends on Lys172, which acts as the Schiff-base intermediate with substrate. Residue Val214 participates in pyruvate binding.

Belongs to the DapA family. As to quaternary structure, homotetramer; dimer of dimers.

Its subcellular location is the cytoplasm. The catalysed reaction is L-aspartate 4-semialdehyde + pyruvate = (2S,4S)-4-hydroxy-2,3,4,5-tetrahydrodipicolinate + H2O + H(+). The protein operates within amino-acid biosynthesis; L-lysine biosynthesis via DAP pathway; (S)-tetrahydrodipicolinate from L-aspartate: step 3/4. In terms of biological role, catalyzes the condensation of (S)-aspartate-beta-semialdehyde [(S)-ASA] and pyruvate to 4-hydroxy-tetrahydrodipicolinate (HTPA). This Prochlorococcus marinus (strain MIT 9303) protein is 4-hydroxy-tetrahydrodipicolinate synthase.